We begin with the raw amino-acid sequence, 327 residues long: Glycerol-3-phosphate dehydrogenase [NAD(P)+] (327 aa).

NADPH-binding residues include phenylalanine 13, arginine 34, and lysine 107. The sn-glycerol 3-phosphate site is built by lysine 107 and glycine 135. Alanine 139 lines the NADPH pocket. Sn-glycerol 3-phosphate is bound by residues lysine 190, aspartate 243, serine 253, arginine 254, and asparagine 255. Lysine 190 acts as the Proton acceptor in catalysis. Residue arginine 254 coordinates NADPH. Positions 276 and 277 each coordinate NADPH.

The protein belongs to the NAD-dependent glycerol-3-phosphate dehydrogenase family.

The protein resides in the cytoplasm. It catalyses the reaction sn-glycerol 3-phosphate + NAD(+) = dihydroxyacetone phosphate + NADH + H(+). The catalysed reaction is sn-glycerol 3-phosphate + NADP(+) = dihydroxyacetone phosphate + NADPH + H(+). It functions in the pathway membrane lipid metabolism; glycerophospholipid metabolism. Its function is as follows. Catalyzes the reduction of the glycolytic intermediate dihydroxyacetone phosphate (DHAP) to sn-glycerol 3-phosphate (G3P), the key precursor for phospholipid synthesis. In Rhizobium johnstonii (strain DSM 114642 / LMG 32736 / 3841) (Rhizobium leguminosarum bv. viciae), this protein is Glycerol-3-phosphate dehydrogenase [NAD(P)+].